We begin with the raw amino-acid sequence, 234 residues long: MKNINLILAWLVHIFTASGLIVGLYSIISIVNGNYSLLLKLTVIGLIIDGIDGTMARKLKVKELIPEIDGTLLDNITDYINYTFIPVIFFYLGEFIEEKYKVAICIGILLSSAYQFSRTDAKTNDNYFRGFPSLWNLFVILNIIFKMEQITNLITMSICIITSFIPIKFIYPSKTKELRKITIPITIISCLIFVVSIFSELSTTALKMAKTVLILYFAYLTLASIYLTYKTRNR.

Residues 1–3 (MKN) lie on the Cytoplasmic side of the membrane. Residues 4–24 (INLILAWLVHIFTASGLIVGL) traverse the membrane as a helical segment. Residues 25–26 (YS) are Periplasmic-facing. The helical transmembrane segment at 27-47 (IISIVNGNYSLLLKLTVIGLI) threads the bilayer. The Cytoplasmic portion of the chain corresponds to 48–75 (IDGIDGTMARKLKVKELIPEIDGTLLDN). Residues 76–96 (ITDYINYTFIPVIFFYLGEFI) form a helical membrane-spanning segment. Residues 97 to 98 (EE) are Periplasmic-facing. The helical transmembrane segment at 99 to 116 (KYKVAICIGILLSSAYQF) threads the bilayer. At 117–126 (SRTDAKTNDN) the chain is on the cytoplasmic side. Residues 127-147 (YFRGFPSLWNLFVILNIIFKM) traverse the membrane as a helical segment. Topologically, residues 148–149 (EQ) are periplasmic. Residues 150–170 (ITNLITMSICIITSFIPIKFI) traverse the membrane as a helical segment. Topologically, residues 171 to 180 (YPSKTKELRK) are cytoplasmic. The chain crosses the membrane as a helical span at residues 181 to 201 (ITIPITIISCLIFVVSIFSEL). At 202–207 (STTALK) the chain is on the periplasmic side. A helical transmembrane segment spans residues 208–228 (MAKTVLILYFAYLTLASIYLT). Residues 229-234 (YKTRNR) are Cytoplasmic-facing.

Belongs to the CDP-alcohol phosphatidyltransferase class-I family. Requires Mn(2+) as cofactor.

It localises to the cell inner membrane. It carries out the reaction a CDP-1,2-diacyl-sn-glycerol + choline = a 1,2-diacyl-sn-glycero-3-phosphocholine + CMP + H(+). Its function is as follows. Condenses choline with CDP-diglyceride to produce phosphatidylcholine and CMP. The polypeptide is Phosphatidylcholine synthase (Borreliella burgdorferi (strain ATCC 35210 / DSM 4680 / CIP 102532 / B31) (Borrelia burgdorferi)).